Here is a 154-residue protein sequence, read N- to C-terminus: Myoglobin (154 aa).

The region spanning 2-148 (GLSDQEWQQV…FRNDMASKYK (147 aa)) is the Globin domain. His-65 contributes to the nitrite binding site. Position 65 (His-65) interacts with O2. His-94 serves as a coordination point for heme b.

This sequence belongs to the globin family. Monomeric.

Its subcellular location is the cytoplasm. The protein resides in the sarcoplasm. It carries out the reaction Fe(III)-heme b-[protein] + nitric oxide + H2O = Fe(II)-heme b-[protein] + nitrite + 2 H(+). It catalyses the reaction H2O2 + AH2 = A + 2 H2O. Functionally, monomeric heme protein which primary function is to store oxygen and facilitate its diffusion within muscle tissues. Reversibly binds oxygen through a pentacoordinated heme iron and enables its timely and efficient release as needed during periods of heightened demand. Depending on the oxidative conditions of tissues and cells, and in addition to its ability to bind oxygen, it also has a nitrite reductase activity whereby it regulates the production of bioactive nitric oxide. Under stress conditions, like hypoxia and anoxia, it also protects cells against reactive oxygen species thanks to its pseudoperoxidase activity. This chain is Myoglobin (MB), found in Anas poecilorhyncha (Indian spot-billed duck).